A 150-amino-acid chain; its full sequence is NADH-quinone oxidoreductase subunit A (150 aa).

3 consecutive transmembrane segments (helical) span residues 14-34, 66-86, and 96-116; these read FAVF…GAFF, FYLV…LYAW, and IGFI…VYLV.

It belongs to the complex I subunit 3 family. In terms of assembly, NDH-1 is composed of 13 different subunits. Subunits NuoA, H, J, K, L, M, N constitute the membrane sector of the complex.

It localises to the cell inner membrane. The catalysed reaction is a quinone + NADH + 5 H(+)(in) = a quinol + NAD(+) + 4 H(+)(out). In terms of biological role, NDH-1 shuttles electrons from NADH, via FMN and iron-sulfur (Fe-S) centers, to quinones in the respiratory chain. The immediate electron acceptor for the enzyme in this species is believed to be ubiquinone. Couples the redox reaction to proton translocation (for every two electrons transferred, four hydrogen ions are translocated across the cytoplasmic membrane), and thus conserves the redox energy in a proton gradient. The sequence is that of NADH-quinone oxidoreductase subunit A from Yersinia enterocolitica serotype O:8 / biotype 1B (strain NCTC 13174 / 8081).